Consider the following 910-residue polypeptide: Staphylococcal nuclease domain-containing protein 1 (910 aa).

Ala2 is subject to N-acetylalanine. TNase-like domains lie at 18-166, 193-328, and 341-496; these read TVQR…MWSE, KPVN…IWRD, and KQFV…LHSK. Residue Thr103 is modified to Phosphothreonine. Lys193 is modified (N6-acetyllysine). Thr235 and Thr240 each carry phosphothreonine. 2 consecutive short sequence motifs (nuclear localization signal) follow at residues 321-325 and 388-392; these read RRLRI and KKLRP. Ser426 bears the Phosphoserine mark. Residue Lys513 forms a Glycyl lysine isopeptide (Lys-Gly) (interchain with G-Cter in SUMO2) linkage. The 136-residue stretch at 525–660 folds into the TNase-like 4 domain; it reads GRSEAVVEYV…KQRKEKVWAH (136 aa). Lys641 carries the N6-acetyllysine modification. Ser645 bears the Phosphoserine mark. The Tudor domain occupies 729 to 787; sequence APRRGEFCIAKFVDGEWYRARVEKVESPAKVHVFYIDYGNREILPSTRLGTLPPAFSTR. Thr779 carries the post-translational modification Phosphothreonine. Ser785 and Ser909 each carry phosphoserine.

Forms a ternary complex with STAT6 and POLR2A. Associates with the RNA-induced silencing complex (RISC). Interacts with the RISC components AGO2, FMR1 and TNRC6A. Interacts with GTF2E1 and GTF2E2. Interacts with PIM1. Interacts with STAT5. Interacts with SYT11 (via C2 2 domain); the interaction with SYT11 is direct. In terms of processing, phosphorylated by PIM1 in vitro.

The protein resides in the cytoplasm. Its subcellular location is the nucleus. The protein localises to the melanosome. The catalysed reaction is Endonucleolytic cleavage to nucleoside 3'-phosphates and 3'-phosphooligonucleotide end-products.. Endonuclease that mediates miRNA decay of both protein-free and AGO2-loaded miRNAs. As part of its function in miRNA decay, regulates mRNAs involved in G1-to-S phase transition. Functions as a bridging factor between STAT6 and the basal transcription factor. Plays a role in PIM1 regulation of MYB activity. Functions as a transcriptional coactivator for STAT5. The protein is Staphylococcal nuclease domain-containing protein 1 (Snd1) of Mus musculus (Mouse).